A 527-amino-acid chain; its full sequence is Phosphoethanolamine transferase OpgE (527 aa).

At 1 to 33 (MNLTLKESLVTRSRVFSPWTAFYFLQSLLINLG) the chain is on the periplasmic side. A helical membrane pass occupies residues 34-54 (LGYPFSLLYTAAFTAILLLLW). Residues 55–62 (RTLPRVQK) lie on the Cytoplasmic side of the membrane. The chain crosses the membrane as a helical span at residues 63 to 83 (VLVGVSSLVAACYFPFAQAYG). Residues 84–106 (APNFNTLLALHSTNMEESTEILT) lie on the Periplasmic side of the membrane. The helical transmembrane segment at 107-127 (IFPWYSYLVGLFIFALGVIAI) threads the bilayer. The Cytoplasmic segment spans residues 128 to 146 (RRKKENEKARWNTFDSLCL). A helical transmembrane segment spans residues 147 to 167 (VFSVATFFVAPVQNLAWGGVF). The Periplasmic portion of the chain corresponds to 168–527 (KLKDTGYPVF…LGTDIFDPKP (360 aa)).

Belongs to the phosphoethanolamine transferase family.

It is found in the cell inner membrane. It participates in glycan metabolism; osmoregulated periplasmic glucan (OPG) biosynthesis. In terms of biological role, catalyzes the addition of a phosphoethanolamine moiety to the osmoregulated periplasmic glucan (OPG) backbone. This chain is Phosphoethanolamine transferase OpgE (opgE), found in Escherichia coli (strain K12).